The primary structure comprises 138 residues: RuBisCO chaperone RbcX (138 aa).

Residues 118 to 138 form a disordered region; it reads VDNFPSETSNGESNNNDSPPS. Polar residues predominate over residues 122–138; that stretch reads PSETSNGESNNNDSPPS.

This sequence belongs to the RbcX family. In terms of assembly, homodimer. Interacts with the exposed C-terminal peptide of RbcL via its central cleft, contacts a second RbcL monomer via its peripheral polar surface.

It localises to the carboxysome. Its subcellular location is the cytoplasm. Functionally, an RbcL-specific chaperone. The central cleft of the RbcX homodimer (RbcX2) binds the C-terminus of an RbcL monomer, stabilizing the C-terminus and probably preventing its reassociation with chaperonin GroEL-ES. At the same time the peripheral region of RbcX2 binds a second RbcL monomer, bridging the RbcL homodimers in the correct orientation. The RbcX2(2)-bound RbcL dimers then assemble into the RbcL8 core (RbcL8-(RbcX2)8). RbcS binding triggers the release of RbcX2. This Synechocystis sp. (strain ATCC 27184 / PCC 6803 / Kazusa) protein is RuBisCO chaperone RbcX.